The sequence spans 160 residues: MLTAVYPGTFDPITRGHEDLVRRAVRLFDRVVVAVAESRNKRPFFSMDERVAMTREVLADVPQVRVEGFSGLLIDFVAEQGAIAVLRGLRAASDFEYEFQLAGMNRNLKPDIETLFLTPSEQYMFISASMIREIAQFGGDVTPFVHPLVARRLSEKIREN.

T9 contributes to the substrate binding site. ATP-binding positions include 9-10 and H17; that span reads TF. Residues K41, L73, and R87 each coordinate substrate. Residues 88–90, E98, and 123–129 each bind ATP; these read GLR and YMFISAS.

Belongs to the bacterial CoaD family. Homohexamer. Mg(2+) serves as cofactor.

The protein resides in the cytoplasm. It carries out the reaction (R)-4'-phosphopantetheine + ATP + H(+) = 3'-dephospho-CoA + diphosphate. It participates in cofactor biosynthesis; coenzyme A biosynthesis; CoA from (R)-pantothenate: step 4/5. Functionally, reversibly transfers an adenylyl group from ATP to 4'-phosphopantetheine, yielding dephospho-CoA (dPCoA) and pyrophosphate. This Thiobacillus denitrificans (strain ATCC 25259 / T1) protein is Phosphopantetheine adenylyltransferase.